The chain runs to 593 residues: MAIDPQPSSPSLSSETIANDTIGNDNNVNEPSVEPKTQEHQHTVPPRLSRIYSQAHHISKSFIDQNYPGEGTTQAPYRINFLPDDSQNAQLLPRWKKWAFVLLQSLACLATTFASSAYSGGIKQIIRAFGISQEVATLGISLYVLGFTFGPLVWAPLSELYGRKKVFFFTFMVATAFSAGAAGAGSIASLLVLRFLTGSIGSAPLSNAPALIADMFDKSERGLAMCMFSGAPFLGPAIGPIAGGFLGETAGWRWLHGLMAAFTGVTWIACTVFIPETYAPYILRKRAQHMSKLTGKVYISTLDADKPPSSAAHQLKNALTRPWLLLFKEPIVFITSIYISIIYGTMYMCFAAFPIVFQQGRGWSQGIGGLAFTGIVIGVILSIISFAFEDKRYARAARSRGAPMEPEDRLPPAIMGSLLIPIGLFWFAWTTFPSIHWIVPIIGTVFFAWGLVLVFMALLNYLIDSYVIFAASIMAANSALRSLFGAAFPLFTRQMYDGLGVQWASSIPAFLALACVPFPFLFYKYGRQIRMKCEYAAEAANVLQKMRSLHVAVTEDDAMNEAEEMWRARTHNSHASAAHSHGHRRSLSYTRSA.

A disordered region spans residues 1 to 45 (MAIDPQPSSPSLSSETIANDTIGNDNNVNEPSVEPKTQEHQHTVP). Residues 9 to 30 (SPSLSSETIANDTIGNDNNVNE) are compositionally biased toward polar residues. The N-linked (GlcNAc...) asparagine glycan is linked to asparagine 19. Transmembrane regions (helical) follow at residues 98-118 (WAFV…SSAY), 135-155 (VATL…LVWA), 167-187 (FFFT…AGSI), 195-215 (FLTG…IADM), 227-247 (MFSG…GFLG), 254-274 (WLHG…TVFI), 337-357 (IYIS…PIVF), 367-387 (IGGL…ISFA), 410-430 (LPPA…FAWT), 438-458 (IVPI…FMAL), 468-488 (IFAA…GAAF), and 503-523 (WASS…FLFY). The disordered stretch occupies residues 570–593 (THNSHASAAHSHGHRRSLSYTRSA).

It belongs to the major facilitator superfamily. DHA1 family. Polyamines/proton antiporter (TC 2.A.1.2.16) subfamily.

The protein resides in the cell membrane. Efflux pump involved in export of fusaric acid, a mycotoxin with low to moderate toxicity to animals and humans, but with high phytotoxic properties. Constitutes a self-protecting mechanism of the fungus against critical levels of FSA within the cell. This Gibberella moniliformis (strain M3125 / FGSC 7600) (Maize ear and stalk rot fungus) protein is Efflux pump FUB11.